Reading from the N-terminus, the 128-residue chain is Probable 4-amino-4-deoxy-L-arabinose-phosphoundecaprenol flippase subunit ArnF (128 aa).

The Cytoplasmic segment spans residues 1 to 2; sequence MG. Residues 3–23 form a helical membrane-spanning segment; that stretch reads LMWGLFSVIIASAAQLSMGFA. The Periplasmic portion of the chain corresponds to 24–35; the sequence is ASHLPPMTHLWD. A helical transmembrane segment spans residues 36–56; the sequence is FIAALLAFGLDARILLLGLLG. At 57–76 the chain is on the cytoplasmic side; that stretch reads YLLSVFCWYKTLHKLALSKA. Residues 77–97 form a helical membrane-spanning segment; sequence YALLSMSYVLVWIASMVLPGW. Over 98-100 the chain is Periplasmic; that stretch reads EGT. A helical membrane pass occupies residues 101-121; the sequence is FSLKALLGVACIMSGLMLIFL. Topologically, residues 122–128 are cytoplasmic; sequence PTTKQRY.

The protein belongs to the ArnF family. As to quaternary structure, heterodimer of ArnE and ArnF.

It is found in the cell inner membrane. It participates in bacterial outer membrane biogenesis; lipopolysaccharide biosynthesis. Functionally, translocates 4-amino-4-deoxy-L-arabinose-phosphoundecaprenol (alpha-L-Ara4N-phosphoundecaprenol) from the cytoplasmic to the periplasmic side of the inner membrane. The chain is Probable 4-amino-4-deoxy-L-arabinose-phosphoundecaprenol flippase subunit ArnF from Escherichia coli O45:K1 (strain S88 / ExPEC).